Reading from the N-terminus, the 375-residue chain is MSCPVIELTQQLIRRPSLSPDDAGCQALLIERLQAIGFTVERMDFADTQNFWAWRGQGETLAFAGHTDVVPPGDADRWINPPFEPTIRDGMLFGRGAADMKGSLAAMVVAAERFVAQHPNHAGRLAFLITSDEEASAHNGTVKVVEALMARNERLDYCLVGEPSSIEVVGDVVKNGRRGSLTCNLTIHGVQGHVAYPHLADNPVHRAAPFLNELVAIEWDQGNEFFPATSMQIANIQAGTGSNNVIPGELFVQFNFRFSTELTDEMIKAQVLALLEKHQLRYTVDWWLSGQPFLTARGKLVDAVVNAVEHYNEIKPQLLTTGGTSDGRFIARMGAQVVELGPVNATIHKINECVNAADLQLLARMYQRIMEQLVA.

Zn(2+) is bound at residue His-66. The active site involves Asp-68. Asp-99 is a binding site for Zn(2+). Glu-133 acts as the Proton acceptor in catalysis. Zn(2+)-binding residues include Glu-134, Glu-162, and His-348.

Belongs to the peptidase M20A family. DapE subfamily. As to quaternary structure, homodimer. The cofactor is Zn(2+). It depends on Co(2+) as a cofactor.

The catalysed reaction is N-succinyl-(2S,6S)-2,6-diaminopimelate + H2O = (2S,6S)-2,6-diaminopimelate + succinate. It participates in amino-acid biosynthesis; L-lysine biosynthesis via DAP pathway; LL-2,6-diaminopimelate from (S)-tetrahydrodipicolinate (succinylase route): step 3/3. In terms of biological role, catalyzes the hydrolysis of N-succinyl-L,L-diaminopimelic acid (SDAP), forming succinate and LL-2,6-diaminopimelate (DAP), an intermediate involved in the bacterial biosynthesis of lysine and meso-diaminopimelic acid, an essential component of bacterial cell walls. This is Succinyl-diaminopimelate desuccinylase from Escherichia coli O7:K1 (strain IAI39 / ExPEC).